A 203-amino-acid polypeptide reads, in one-letter code: Small ribosomal subunit protein uS4 (203 aa).

The tract at residues 1–46 (MSKRQSAKYKLDRRMGENIWGRPKSPVNRREYGPGQHGQRRKGKMS) is disordered. The region spanning 94-157 (RRLDAVVYRA…QEMALVAEAQ (64 aa)) is the S4 RNA-binding domain.

The protein belongs to the universal ribosomal protein uS4 family. In terms of assembly, part of the 30S ribosomal subunit. Contacts protein S5. The interaction surface between S4 and S5 is involved in control of translational fidelity.

Its function is as follows. One of the primary rRNA binding proteins, it binds directly to 16S rRNA where it nucleates assembly of the body of the 30S subunit. In terms of biological role, with S5 and S12 plays an important role in translational accuracy. This is Small ribosomal subunit protein uS4 from Sphingopyxis alaskensis (strain DSM 13593 / LMG 18877 / RB2256) (Sphingomonas alaskensis).